Here is a 160-residue protein sequence, read N- to C-terminus: Major pollen allergen Aln g 1 (160 aa).

This sequence belongs to the BetVI family.

This Alnus glutinosa (European alder) protein is Major pollen allergen Aln g 1.